Here is a 205-residue protein sequence, read N- to C-terminus: MAFVVGLTGGIASGKTTIANMFAELGATIIDADIVARQVVTKGSPLFLKIVQHFGQQVLTTQGELNRAQLRQLIFANQVEKNWLNNLLHPAIRREMLIQLRQARGPYVLFVVPLLIENKLIEFCQRVLVIDVYPEVQLARALTRDRSNIATIRGIMASQVNRLTRLSYANDIIENNLPLAESLERLQMQVQQLHQYYLTLATQQE.

The region spanning 4–204 (VVGLTGGIAS…QYYLTLATQQ (201 aa)) is the DPCK domain. Residue 12-17 (ASGKTT) participates in ATP binding.

The protein belongs to the CoaE family.

It is found in the cytoplasm. It carries out the reaction 3'-dephospho-CoA + ATP = ADP + CoA + H(+). It participates in cofactor biosynthesis; coenzyme A biosynthesis; CoA from (R)-pantothenate: step 5/5. Catalyzes the phosphorylation of the 3'-hydroxyl group of dephosphocoenzyme A to form coenzyme A. This is Dephospho-CoA kinase from Haemophilus ducreyi (strain 35000HP / ATCC 700724).